The sequence spans 744 residues: Tripartite motif-containing protein 2 (744 aa).

Position 10 is a phosphoserine (Ser10). The RING-type zinc-finger motif lies at 23–64 (CSICLERYKNPKVLPCLHTFCERCLQNYIPAHSLTLSCPVCR). The B box-type zinc finger occupies 113–154 (GKPLSCPNHDGNVMDFYCQSCETAMCRECTEGEHAEHPTVPL). 4 residues coordinate Zn(2+): Cys118, His121, Cys141, and His146. A Filamin repeat occupies 320-421 (TTNAVASETV…IRGSPFKLKV (102 aa)). Thr371 carries the post-translational modification Phosphothreonine. A phosphoserine mark is found at Ser375, Ser424, and Ser428. Residues 432–462 (EGVKRRVKSPGSGHVKQKAVKRPASMYSTGK) form a disordered region. 6 NHL repeats span residues 473–516 (IFRV…FSND), 520–563 (KSRF…FSSD), 564–605 (GKFK…FQPN), 609–652 (VTRF…FNQE), 656–699 (MLKF…FDGS), and 700–743 (GSFL…YRYL).

It belongs to the TRIM/RBCC family. In terms of assembly, forms homooligomers. Interacts with TRIM3; this interaction reduces TRIM2 activity. Interacts with myosin V; myosin V may not be a substrate for ubiquitination. Interacts with NEFL. Interacts with phosphorylated BCL2L11. Interacts with SIRPA. Post-translationally, RING-type zinc finger-dependent and UBE2D1-dependent autoubiquitination.

The protein localises to the cytoplasm. The catalysed reaction is S-ubiquitinyl-[E2 ubiquitin-conjugating enzyme]-L-cysteine + [acceptor protein]-L-lysine = [E2 ubiquitin-conjugating enzyme]-L-cysteine + N(6)-ubiquitinyl-[acceptor protein]-L-lysine.. The protein operates within protein modification; protein ubiquitination. In terms of biological role, UBE2D1-dependent E3 ubiquitin-protein ligase that mediates the ubiquitination of NEFL and of phosphorylated BCL2L11. Plays a neuroprotective function. May play a role in neuronal rapid ischemic tolerance. Plays a role in antiviral immunity and limits New World arenavirus infection independently of its ubiquitin ligase activity. This Bos taurus (Bovine) protein is Tripartite motif-containing protein 2 (TRIM2).